Consider the following 228-residue polypeptide: N-(5'-phosphoribosyl)anthranilate isomerase (228 aa).

The protein belongs to the TrpF family.

It carries out the reaction N-(5-phospho-beta-D-ribosyl)anthranilate = 1-(2-carboxyphenylamino)-1-deoxy-D-ribulose 5-phosphate. The protein operates within amino-acid biosynthesis; L-tryptophan biosynthesis; L-tryptophan from chorismate: step 3/5. In Azorhizobium caulinodans (strain ATCC 43989 / DSM 5975 / JCM 20966 / LMG 6465 / NBRC 14845 / NCIMB 13405 / ORS 571), this protein is N-(5'-phosphoribosyl)anthranilate isomerase.